The primary structure comprises 122 residues: Large ribosomal subunit protein uL14 (122 aa).

This sequence belongs to the universal ribosomal protein uL14 family. As to quaternary structure, part of the 50S ribosomal subunit. Forms a cluster with proteins L3 and L19. In the 70S ribosome, L14 and L19 interact and together make contacts with the 16S rRNA in bridges B5 and B8.

In terms of biological role, binds to 23S rRNA. Forms part of two intersubunit bridges in the 70S ribosome. The protein is Large ribosomal subunit protein uL14 of Nitrosomonas europaea (strain ATCC 19718 / CIP 103999 / KCTC 2705 / NBRC 14298).